The chain runs to 441 residues: Rho-associated protein kinase 1 (441 aa).

A coiled-coil region spans residues 1 to 99 (NSKSQMDKDY…RLEQEVNEHK (99 aa)). An SHROOM3 binding region spans residues 114–353 (EAKSVAMCEM…TLSRLEETNS (240 aa)). The 67-residue stretch at 356-422 (TKDIELLRKE…LAEIMNRKDF (67 aa)) folds into the RhoBD domain. Residues 418–441 (NRKDFKIDRKKANTQDLRKKKKKK) adopt a coiled-coil conformation.

This sequence belongs to the protein kinase superfamily. AGC Ser/Thr protein kinase family. In terms of assembly, homodimer. Interacts with RHOA (activated by GTP), RHOB, RHOC, GEM, MYLC2B, RHOE, PPP1R12A, LIMK1, LIMK2, TSG101, CHORDC1, DAPK3, PFN1, PTEN and JIP3. Interacts with FHOD1 in a Src-dependent manner. Interacts with ITGB1BP1 (via N-terminus and PTB domain). Interacts with SHROOM3. Mg(2+) is required as a cofactor.

It is found in the cytoplasm. Its subcellular location is the golgi apparatus membrane. It localises to the cytoskeleton. The protein resides in the microtubule organizing center. The protein localises to the centrosome. It is found in the centriole. Its subcellular location is the cell projection. It localises to the bleb. The protein resides in the cell membrane. The protein localises to the lamellipodium. It is found in the ruffle. The catalysed reaction is L-seryl-[protein] + ATP = O-phospho-L-seryl-[protein] + ADP + H(+). The enzyme catalyses L-threonyl-[protein] + ATP = O-phospho-L-threonyl-[protein] + ADP + H(+). Its activity is regulated as follows. Activated by RHOA binding. Inhibited by Y-27632. Its function is as follows. Protein kinase which is a key regulator of the actin cytoskeleton and cell polarity. Involved in regulation of smooth muscle contraction, actin cytoskeleton organization, stress fiber and focal adhesion formation, neurite retraction, cell adhesion and motility via phosphorylation of DAPK3, GFAP, LIMK1, LIMK2, MYL9/MLC2, TPPP, PFN1 and PPP1R12A. Phosphorylates FHOD1 and acts synergistically with it to promote SRC-dependent non-apoptotic plasma membrane blebbing. Phosphorylates JIP3 and regulates the recruitment of JNK to JIP3 upon UVB-induced stress. Acts as a suppressor of inflammatory cell migration by regulating PTEN phosphorylation and stability. Acts as a negative regulator of VEGF-induced angiogenic endothelial cell activation. Required for centrosome positioning and centrosome-dependent exit from mitosis. Plays a role in terminal erythroid differentiation. Inhibits podocyte motility via regulation of actin cytoskeletal dynamics and phosphorylation of CFL1. Promotes keratinocyte terminal differentiation. Involved in osteoblast compaction through the fibronectin fibrillogenesis cell-mediated matrix assembly process, essential for osteoblast mineralization. May regulate closure of the eyelids and ventral body wall by inducing the assembly of actomyosin bundles. The chain is Rho-associated protein kinase 1 (ROCK1) from Bos taurus (Bovine).